The chain runs to 500 residues: Aspartyl/glutamyl-tRNA(Asn/Gln) amidotransferase subunit B (500 aa).

Belongs to the GatB/GatE family. GatB subfamily. As to quaternary structure, heterotrimer of A, B and C subunits.

It catalyses the reaction L-glutamyl-tRNA(Gln) + L-glutamine + ATP + H2O = L-glutaminyl-tRNA(Gln) + L-glutamate + ADP + phosphate + H(+). The enzyme catalyses L-aspartyl-tRNA(Asn) + L-glutamine + ATP + H2O = L-asparaginyl-tRNA(Asn) + L-glutamate + ADP + phosphate + 2 H(+). Allows the formation of correctly charged Asn-tRNA(Asn) or Gln-tRNA(Gln) through the transamidation of misacylated Asp-tRNA(Asn) or Glu-tRNA(Gln) in organisms which lack either or both of asparaginyl-tRNA or glutaminyl-tRNA synthetases. The reaction takes place in the presence of glutamine and ATP through an activated phospho-Asp-tRNA(Asn) or phospho-Glu-tRNA(Gln). The chain is Aspartyl/glutamyl-tRNA(Asn/Gln) amidotransferase subunit B from Rhizobium etli (strain CIAT 652).